Here is a 227-residue protein sequence, read N- to C-terminus: UPF0173 metal-dependent hydrolase YtkL (227 aa).

It belongs to the UPF0173 family.

In Bacillus subtilis (strain 168), this protein is UPF0173 metal-dependent hydrolase YtkL (ytkL).